Consider the following 785-residue polypeptide: Phenylalanine--tRNA ligase beta subunit (785 aa).

The region spanning 39–147 is the tRNA-binding domain; it reads FPIPRGVVFA…DALPPGTPLS (109 aa). The 76-residue stretch at 399 to 474 folds into the B5 domain; that stretch reads KPPEAIPFRP…RIQGYETIPL (76 aa). Positions 452, 458, 461, and 462 each coordinate Mg(2+). In terms of domain architecture, FDX-ACB spans 688–780; sequence SRHPAAFRDL…ALRARGFGLR (93 aa).

Belongs to the phenylalanyl-tRNA synthetase beta subunit family. Type 1 subfamily. As to quaternary structure, tetramer of two alpha and two beta subunits. Requires Mg(2+) as cofactor.

It localises to the cytoplasm. The enzyme catalyses tRNA(Phe) + L-phenylalanine + ATP = L-phenylalanyl-tRNA(Phe) + AMP + diphosphate + H(+). The chain is Phenylalanine--tRNA ligase beta subunit (pheT) from Thermus thermophilus (strain ATCC 27634 / DSM 579 / HB8).